Here is a 362-residue protein sequence, read N- to C-terminus: Alkanal monooxygenase alpha chain (362 aa).

This sequence belongs to the bacterial luciferase oxidoreductase family. As to quaternary structure, heterodimer of an alpha and a beta chain.

It catalyses the reaction a long-chain fatty aldehyde + FMNH2 + O2 = a long-chain fatty acid + hnu + FMN + H2O + 2 H(+). Light-emitting reaction in luminous bacteria. In Photorhabdus luminescens (Xenorhabdus luminescens), this protein is Alkanal monooxygenase alpha chain (luxA).